A 103-amino-acid chain; its full sequence is SOSS complex subunit C (103 aa).

The protein belongs to the SOSS-C family. Belongs to the multiprotein complex Integrator. Component of the SOSS complex, composed of soss-b (soss-b1/nabp2 or soss-b2/nabp1), soss-a/ints3 and soss-c/inip.

The protein localises to the nucleus. In terms of biological role, component of the SOSS complex, a multiprotein complex that functions downstream of the MRN complex to promote DNA repair and G2/M checkpoint. The SOSS complex associates with single-stranded DNA at DNA lesions and influences diverse endpoints in the cellular DNA damage response including cell-cycle checkpoint activation, recombinational repair and maintenance of genomic stability. Required for efficient homologous recombination-dependent repair of double-strand breaks (DSBs). This Danio rerio (Zebrafish) protein is SOSS complex subunit C (inip).